We begin with the raw amino-acid sequence, 298 residues long: Protoheme IX farnesyltransferase (298 aa).

Helical transmembrane passes span 16–36 (VVAL…PDMP), 45–65 (ALGF…NQLL), 93–113 (VFAG…VNVI), 114–134 (TAVL…VYLK), 141–161 (IVIG…AVTG), 172–192 (SLLV…LAIF), 223–243 (VLLA…VFYL), 244–264 (GGAI…LNPP), and 277–297 (IVYL…LPWV).

Belongs to the UbiA prenyltransferase family. Protoheme IX farnesyltransferase subfamily.

The protein resides in the cell inner membrane. The catalysed reaction is heme b + (2E,6E)-farnesyl diphosphate + H2O = Fe(II)-heme o + diphosphate. Its pathway is porphyrin-containing compound metabolism; heme O biosynthesis; heme O from protoheme: step 1/1. Converts heme B (protoheme IX) to heme O by substitution of the vinyl group on carbon 2 of heme B porphyrin ring with a hydroxyethyl farnesyl side group. In Xanthomonas euvesicatoria pv. vesicatoria (strain 85-10) (Xanthomonas campestris pv. vesicatoria), this protein is Protoheme IX farnesyltransferase.